Reading from the N-terminus, the 396-residue chain is MSATDRMGPRAVPGLRLALLLLLVLGTPKSGVQGQEGLDFPEYDGVDRVINVNAKNYKNVFKKYEVLALLYHEPPEDDKASQRQFEMEELILELAAQVLEDKGVGFGLVDSEKDAAVAKKLGLTEVDSMYVFKGDEVIEYDGEFSADTIVEFLLDVLEDPVELIEGERELQAFENIEDEIKLIGYFKSKDSEHYKAFEDAAEEFHPYIPFFATFDSKVAKKLTLKLNEIDFYEAFMEEPVTIPDKPNSEEEIVNFVEEHRRSTLRKLKPESMYETWEDDMDGIHIVAFAEEADPDGFEFLETLKAVAQDNTENPDLSIIWIDPDDFPLLVPYWEKTFDIDLSAPQIGVVNVTDADSVWMEMDDEEDLPSAEELEDWLEDVLEGEINTEDDDDDDDD.

The signal sequence occupies residues 1–34 (MSATDRMGPRAVPGLRLALLLLLVLGTPKSGVQG). Tyrosine 43 carries the phosphotyrosine modification. Serine 81 bears the Phosphoserine mark. Position 124 is a phosphothreonine (threonine 124). At serine 216 the chain carries Phosphoserine. An N-linked (GlcNAc...) asparagine glycan is attached at asparagine 350.

Belongs to the calsequestrin family. In terms of assembly, monomer; increases in response to a depletion of intracellular calcium. Homodimer. Homotetramer and homopolymer. Can form linear homooligomers. Ca(2+) ions promote oligomerization. Interacts (via C-terminal end and preferentially with the monomeric form) with STIM1; this interaction increases in response to a depletion of intracellular calcium, decreases both STIM1 aggregation and clustering, interaction of STIM1 with ORAI1 and store-operated Ca(2+) entry (SOCE) activity. Interacts with ASPH and TRDN. N-glycosylated. In terms of tissue distribution, expressed in myoblasts (at protein level).

It localises to the endoplasmic reticulum. It is found in the sarcoplasmic reticulum. The protein localises to the sarcoplasmic reticulum lumen. Its subcellular location is the sarcoplasmic reticulum membrane. The protein resides in the mitochondrion matrix. Calsequestrin is a high-capacity, moderate affinity, calcium-binding protein and thus acts as an internal calcium store in muscle. Calcium ions are bound by clusters of acidic residues at the protein surface, often at the interface between subunits. Can bind around 80 Ca(2+) ions. Regulates the release of lumenal Ca(2+) via the calcium release channel RYR1; this plays an important role in triggering muscle contraction. Negatively regulates store-operated Ca(2+) entry (SOCE) activity. This chain is Calsequestrin-1 (CASQ1), found in Homo sapiens (Human).